The chain runs to 805 residues: MSSSCWLLLSLVAVATAQSLIEEKAESFLNKFNQEAEDLSYQSSLASWNYNTNITEENAQKMNEAAAKWSAFYEEQSKIAQNFSLQEIQNATIKRQLKALQQSGSSALSPDKNKQLNTILNTMSTIYSTGKVCNSMNPQECFLLEPGLDEIMATSTDYNRRLWAWEGWRAEVGKQLRPLYEEYVVLKNEMARANNYEDYGDYWRGDYEAEGVEGYNYNRNQLIEDVENTFKEIKPLYEQLHAYVRTKLMEVYPSYISPTGCLPAHLLGDMWGRFWTNLYPLTTPFLQKPNIDVTDAMVNQSWDAERIFKEAEKFFVSVGLPQMTPGFWTNSMLTEPGDDRKVVCHPTAWDLGHGDFRIKMCTKVTMDNFLTAHHEMGHIQYDMAYAKQPFLLRNGANEGFHEAVGEIMSLSAATPKHLKSIGLLPSNFQEDNETEINFLLKQALTIVGTLPFTYMLEKWRWMVFQDKIPREQWTKKWWEMKREIVGVVEPLPHDETYCDPASLFHVSNDYSFIRYYTRTIYQFQFQEALCQAAKHDGPLHKCDISNSTEAGQKLLNMLSLGNSGPWTLALENVVGSRNMDVKPLLNYFQPLFVWLKEQNRNSTVGWSTDWSPYADQSIKVRISLKSALGKNAYEWTDNEMYLFRSSVAYAMREYFSREKNQTVPFGEADVWVSDLKPRVSFNFFVTSPKNVSDIIPRSEVEEAIRMSRGRINDIFGLNDNSLEFLGIYPTLKPPYEPPVTIWLIIFGVVMGTVVVGIVILIVTGIKGRKKKNETKREENPYDSMDIGKGESNAGFQNSDDAQTSF.

The first 17 residues, 1–17 (MSSSCWLLLSLVAVATA), serve as a signal peptide directing secretion. Residues 18–740 (QSLIEEKAES…LKPPYEPPVT (723 aa)) lie on the Extracellular side of the membrane. The region spanning 19–607 (SLIEEKAESF…QNRNSTVGWS (589 aa)) is the Peptidase M2 domain. 3 N-linked (GlcNAc...) asparagine glycosylation sites follow: N53, N82, and N90. A disulfide bond links C133 and C141. Residue R169 coordinates chloride. R273 contacts substrate. N-linked (GlcNAc...) asparagine glycosylation occurs at N299. A disulfide bond links C344 and C361. 345-346 (HP) is a binding site for substrate. Position 374 (H374) interacts with Zn(2+). E375 serves as the catalytic Proton acceptor. Residues H378 and E402 each coordinate Zn(2+). The N-linked (GlcNAc...) asparagine glycan is linked to N432. W477 and K481 together coordinate chloride. The active-site Proton donor is H505. Residue Y515 coordinates substrate. A disulfide bridge links C530 with C542. N-linked (GlcNAc...) asparagine glycans are attached at residues N546 and N601. Residues 614–805 (ADQSIKVRIS…QNSDDAQTSF (192 aa)) enclose the Collectrin-like domain. Residues 652–659 (REYFSREK) are essential for cleavage by ADAM17. 2 N-linked (GlcNAc...) asparagine glycosylation sites follow: N660 and N690. Residues 697 to 716 (RSEVEEAIRMSRGRINDIFG) are essential for cleavage by TMPRSS11D and TMPRSS2. The chain crosses the membrane as a helical span at residues 741–761 (IWLIIFGVVMGTVVVGIVILI). Over 762–805 (VTGIKGRKKKNETKREENPYDSMDIGKGESNAGFQNSDDAQTSF) the chain is Cytoplasmic. The segment at 771 to 805 (KNETKREENPYDSMDIGKGESNAGFQNSDDAQTSF) is disordered. The short motif at 778-786 (ENPYDSMDI) is the LIR element. Y781 carries the post-translational modification Phosphotyrosine. Positions 781-784 (YDSM) match the Endocytic sorting signal motif. Residues 781 to 785 (YDSMD) carry the SH2-binding motif. A Phosphoserine modification is found at S783. A Glycyl lysine isopeptide (Lys-Gly) (interchain with G-Cter in ubiquitin) cross-link involves residue K788. Positions 792-795 (NAGF) match the PTB motif. Over residues 793–805 (AGFQNSDDAQTSF) the composition is skewed to polar residues. A PDZ-binding motif is present at residues 803–805 (TSF).

The protein belongs to the peptidase M2 family. As to quaternary structure, homodimer. Interacts with the catalytically active form of TMPRSS2. Interacts with SLC6A19; this interaction is essential for expression and function of SLC6A19 in intestine. Interacts with ITGA5:ITGB1. Probably interacts (via endocytic sorting signal motif) with AP2M1; the interaction is inhibited by phosphorylation of Tyr-781. Interacts (via PDZ-binding motif) with NHERF1 (via PDZ domains); the interaction may enhance ACE2 membrane residence. Requires Zn(2+) as cofactor. The cofactor is chloride. In terms of processing, glycosylated. Post-translationally, proteolytic cleavage by ADAM17 generates a secreted form. Also cleaved by serine proteases: TMPRSS2, TMPRSS11D and HPN/TMPRSS1. Phosphorylated. Phosphorylation at Tyr-781 probably inhibits interaction with AP2M1 and enables interactions with proteins containing SH2 domains. In terms of processing, ubiquitinated. Ubiquitinated on Lys-788 via 'Lys-48'-linked ubiquitin. 'Lys-48'-linked deubiquitinated by USP50 on the Lys-788; leading to its stabilization. As to expression, expressed in heart, kidney and forebrain. In testis, expression is restricted to Leydig cells. In heart, expressed in endothelial cells from small and large arteries, arterial smooth muscle cells, and myocytes (at protein level). Ubiquitously expressed, with highest levels in ileum, bladder and lung.

Its subcellular location is the secreted. The protein localises to the cell membrane. It is found in the cytoplasm. The protein resides in the cell projection. It localises to the cilium. Its subcellular location is the apical cell membrane. The enzyme catalyses angiotensin II + H2O = angiotensin-(1-7) + L-phenylalanine. It catalyses the reaction angiotensin I + H2O = angiotensin-(1-9) + L-leucine. It carries out the reaction bradykinin(1-8) + H2O = bradykinin(1-7) + L-phenylalanine. The catalysed reaction is neurotensin + H2O = neurotensin-(1-12) + L-leucine. The enzyme catalyses kinetensin + H2O = kinetensin-(1-8) + L-leucine. It catalyses the reaction dynorphin A-(1-13) + H2O = dynorphin A-(1-12) + L-lysine. It carries out the reaction apelin-13 + H2O = apelin-12 + L-phenylalanine. The catalysed reaction is [Pyr1]apelin-13 + H2O = [Pyr1]apelin-12 + L-phenylalanine. The enzyme catalyses apelin-17 + H2O = apelin-16 + L-phenylalanine. Activated by chloride and fluoride, but not bromide. Inhibited by MLN-4760, cFP_Leu, and EDTA, but not by the ACE inhibitors linosipril, captopril, enalaprilat. Essential counter-regulatory carboxypeptidase of the renin-angiotensin hormone system that is a critical regulator of blood volume, systemic vascular resistance, and thus cardiovascular homeostasis. Converts angiotensin I to angiotensin 1-9, a nine-amino acid peptide with anti-hypertrophic effects in cardiomyocytes, and angiotensin II to angiotensin 1-7, which then acts as a beneficial vasodilator and anti-proliferation agent, counterbalancing the actions of the vasoconstrictor angiotensin II. Also removes the C-terminal residue from three other vasoactive peptides, neurotensin, kinetensin, and des-Arg bradykinin, but is not active on bradykinin. Also cleaves other biological peptides, such as apelins, casomorphins and dynorphin A. Plays an important role in amino acid transport by acting as binding partner of amino acid transporter SLC6A19 in intestine, regulating trafficking, expression on the cell surface, and its catalytic activity. In Rattus norvegicus (Rat), this protein is Angiotensin-converting enzyme 2 (Ace2).